The sequence spans 341 residues: MVTDQGGRTSEADGGPVRHIPVLLEEVLAALEPAPGKVILDGTFGAGGYASAILDAGAEVIALDRDPTAIAAGQSMVSASGGRLSLIHSRFSGLAEHAPAEGLDGVVLDVGVSSMQIDEAERGFSFQKKGPLDMRMSAAGVSAADVVNRAKVSDLIRIFGFLGEEKQAGRIARTIEKRRAEAPFETTRDLANLIETVTPRKAKDKIHPATRVFQALRIFVNDELGELAAALFAAERALKPGGRLVVVSFHSLEDRIVKTFFQDRSGKAGGSRHLPLVTARAATFAPVGKPMVSASDEEASRNPRARSAKLRAGIRTAAPSPGADLSIFNLPELASLARLGG.

S-adenosyl-L-methionine contacts are provided by residues 47–49 (GGY), Asp64, Phe91, Asp109, and Gln116.

Belongs to the methyltransferase superfamily. RsmH family.

The protein localises to the cytoplasm. The enzyme catalyses cytidine(1402) in 16S rRNA + S-adenosyl-L-methionine = N(4)-methylcytidine(1402) in 16S rRNA + S-adenosyl-L-homocysteine + H(+). Its function is as follows. Specifically methylates the N4 position of cytidine in position 1402 (C1402) of 16S rRNA. This chain is Ribosomal RNA small subunit methyltransferase H, found in Sinorhizobium medicae (strain WSM419) (Ensifer medicae).